The sequence spans 388 residues: MGSLSPLEPLFTPLRIGAFALQHRVVQAPCTRMRSTKESDGIWVPNDLNVEYYAQRASKGGLMLSEATPISRDAAGYPGVPGIFTPSQIEGWRKVTNAVHTKGGLILCQLWHVGRATTPGFLGGKTPLAPSDIPISGKALDGNVYADAPPRPMTVDEIKEVVLEYAAASKRAIEAGFDGVEIHGGNGYLLDQFLHDNVNNRTDAYGGSIENRSRIVLEIISAVTEAIGAERVGIRLSPYNYFQDTRDSNPQKHWGYLCTQIASLPESSRPAYVHMIEPRFDEILDESEKISALETMQEVVKPSLDGLRSSLKKGGVSFIAAGNFKPENAGEKLITDSADAIAFGRLFISNPDLPRRLKEGIELTKYDRSTFYGATPPEKGYTDYPFAQ.

This sequence belongs to the NADH:flavin oxidoreductase/NADH oxidase family. FMN is required as a cofactor.

In terms of biological role, flavin oxidoreductase, part of the hnx cluster involved in the purine degradation. The nicotinate hydroxylase hnxS accepts nicotinate as a substrate and catalyzes the first step of nicotinate catabolism. The major facilitator-type transporters hxnP and hxnZ are probably involved in the uptake of nicotinate-derived metabolites, and the oxidoreductases hxnT and hxnY in the further metabolism of 6-OH nicotinic acid. The protein is Flavin oxidoreductase hxnT of Emericella nidulans (strain FGSC A4 / ATCC 38163 / CBS 112.46 / NRRL 194 / M139) (Aspergillus nidulans).